Here is a 273-residue protein sequence, read N- to C-terminus: Dermonecrotic toxin LdSicTox-alphaIB3ai (273 aa).

The active site involves histidine 5. 2 residues coordinate Mg(2+): glutamate 25 and aspartate 27. Residue histidine 41 is the Nucleophile of the active site. 2 disulfides stabilise this stretch: cysteine 45–cysteine 51 and cysteine 47–cysteine 190. A Mg(2+)-binding site is contributed by aspartate 85.

It belongs to the arthropod phospholipase D family. Class II subfamily. Mg(2+) serves as cofactor. As to expression, expressed by the venom gland.

The protein localises to the secreted. It carries out the reaction an N-(acyl)-sphingosylphosphocholine = an N-(acyl)-sphingosyl-1,3-cyclic phosphate + choline. The enzyme catalyses an N-(acyl)-sphingosylphosphoethanolamine = an N-(acyl)-sphingosyl-1,3-cyclic phosphate + ethanolamine. It catalyses the reaction a 1-acyl-sn-glycero-3-phosphocholine = a 1-acyl-sn-glycero-2,3-cyclic phosphate + choline. The catalysed reaction is a 1-acyl-sn-glycero-3-phosphoethanolamine = a 1-acyl-sn-glycero-2,3-cyclic phosphate + ethanolamine. Functionally, dermonecrotic toxins cleave the phosphodiester linkage between the phosphate and headgroup of certain phospholipids (sphingolipid and lysolipid substrates), forming an alcohol (often choline) and a cyclic phosphate. This toxin acts on sphingomyelin (SM). It may also act on ceramide phosphoethanolamine (CPE), lysophosphatidylcholine (LPC) and lysophosphatidylethanolamine (LPE), but not on lysophosphatidylserine (LPS), and lysophosphatidylglycerol (LPG). It acts by transphosphatidylation, releasing exclusively cyclic phosphate products as second products. Induces dermonecrosis, hemolysis, increased vascular permeability, edema, inflammatory response, and platelet aggregation. This Loxosceles deserta (Desert recluse spider) protein is Dermonecrotic toxin LdSicTox-alphaIB3ai.